Consider the following 179-residue polypeptide: Large ribosomal subunit protein uL5 (179 aa).

It belongs to the universal ribosomal protein uL5 family. In terms of assembly, part of the 50S ribosomal subunit; part of the 5S rRNA/L5/L18/L25 subcomplex. Contacts the 5S rRNA and the P site tRNA. Forms a bridge to the 30S subunit in the 70S ribosome.

This is one of the proteins that bind and probably mediate the attachment of the 5S RNA into the large ribosomal subunit, where it forms part of the central protuberance. In the 70S ribosome it contacts protein S13 of the 30S subunit (bridge B1b), connecting the 2 subunits; this bridge is implicated in subunit movement. Contacts the P site tRNA; the 5S rRNA and some of its associated proteins might help stabilize positioning of ribosome-bound tRNAs. The polypeptide is Large ribosomal subunit protein uL5 (Bacillus pumilus (strain SAFR-032)).